The chain runs to 202 residues: Ribonuclease HII (202 aa).

Residues 12-201 form the RNase H type-2 domain; that stretch reads LLIAGVDEAG…VRQLKLFIPE (190 aa). Aspartate 18, glutamate 19, and aspartate 110 together coordinate a divalent metal cation.

The protein belongs to the RNase HII family. The cofactor is Mn(2+). Mg(2+) is required as a cofactor.

It is found in the cytoplasm. The catalysed reaction is Endonucleolytic cleavage to 5'-phosphomonoester.. Its function is as follows. Endonuclease that specifically degrades the RNA of RNA-DNA hybrids. In Coxiella burnetii (strain CbuK_Q154) (Coxiella burnetii (strain Q154)), this protein is Ribonuclease HII.